A 480-amino-acid polypeptide reads, in one-letter code: Coronin-2B (480 aa).

WD repeat units lie at residues 29-77, 78-127, 128-170, 171-212, 213-259, 260-305, and 306-345; these read HCFD…GRIE, PNYP…RNMT, EALL…LDVG, EPVK…PRSG, RVLQ…EDLS, MPLI…TEKP, and YLSYLMEFRSPAPQKGLGVMPKHGLDVSACEVFRFYKLVT. A coiled-coil region spans residues 436-479; it reads NELLRMFFRQQDEIRRLKEELAQKDIRIRQLQLELKNLRNSPKN.

This sequence belongs to the WD repeat coronin family. As to quaternary structure, binds to F-actin and to vinculin. In terms of tissue distribution, expressed predominantly in brain.

Its subcellular location is the cytoplasm. It localises to the cytoskeleton. In terms of biological role, may play a role in the reorganization of neuronal actin structure. This chain is Coronin-2B (CORO2B), found in Homo sapiens (Human).